Consider the following 524-residue polypeptide: Leukotriene-B4 omega-hydroxylase 3 (524 aa).

E328 and C468 together coordinate heme.

Belongs to the cytochrome P450 family. Heme is required as a cofactor.

The protein resides in the endoplasmic reticulum membrane. Its subcellular location is the microsome membrane. The catalysed reaction is leukotriene B4 + reduced [NADPH--hemoprotein reductase] + O2 = 20-hydroxy-leukotriene B4 + oxidized [NADPH--hemoprotein reductase] + H2O + H(+). It participates in lipid metabolism; leukotriene B4 degradation. In terms of biological role, cytochromes P450 are a group of heme-thiolate monooxygenases. Catalyzes the omega-hydroxylation of LTB4. The polypeptide is Leukotriene-B4 omega-hydroxylase 3 (Cyp4f14) (Mus musculus (Mouse)).